The sequence spans 1477 residues: Neurexin-1 (1477 aa).

Positions 1 to 30 are cleaved as a signal peptide; that stretch reads MGTALLQRGGCFLLCLSLLLLGCWAELGSG. The region spanning 31 to 217 is the Laminin G-like 1 domain; the sequence is LEFPGAEGQW…PPNSGGGSPC (187 aa). The Extracellular portion of the chain corresponds to 31–1401; it reads LEFPGAEGQW…EVIRESSSTT (1371 aa). N-linked (GlcNAc...) asparagine glycosylation is found at Asn125 and Asn190. Residues 198 to 221 form a disordered region; it reads DSGEVKLDDEPPNSGGGSPCEAGE. Residues 213–256 enclose the EGF-like 1 domain; sequence GGSPCEAGEEGEGGVCLNGGVCSVVDDQAVCDCSRTGFRGKDCS. Disulfide bonds link Cys228-Cys243 and Cys245-Cys255. Laminin G-like domains follow at residues 283-473 and 480-672; these read IATF…AFKC and DPIT…KPSC. Asp329, Leu346, and Met407 together coordinate Ca(2+). 5 disulfides stabilise this stretch: Cys437–Cys473, Cys643–Cys672, Cys680–Cys691, Cys685–Cys700, and Cys702–Cys712. Residues 676–713 enclose the EGF-like 2 domain; that stretch reads TAKPCLSNPCKNNGMCRDGWNRYVCDCSGTGYLGRSCE. Laminin G-like domains follow at residues 718–891 and 905–1080; these read VLSY…IDYC and DPVT…ERGC. Ca(2+) contacts are provided by Asp765 and Leu782. An N-linked (GlcNAc...) asparagine glycan is attached at Asn790. Arg841 serves as a coordination point for Ca(2+). 5 cysteine pairs are disulfide-bonded: Cys883–Cys891, Cys1052–Cys1080, Cys1087–Cys1098, Cys1092–Cys1107, and Cys1109–Cys1119. Residues 1083–1120 enclose the EGF-like 3 domain; the sequence is PSTTCQEDSCSNQGVCLQQWDGFSCDCSMTSFSGPLCN. A Laminin G-like 6 domain is found at 1126–1294; sequence YIFSKGGGQI…DANIAIVGNV (169 aa). Ca(2+)-binding residues include Asp1176 and Val1193. Residue Asn1223 is glycosylated (N-linked (GlcNAc...) asparagine). Residues Ile1245 and Asn1247 each coordinate Ca(2+). Positions 1325 to 1390 are disordered; sequence TTTLATSTAR…AGGREPYPGS (66 aa). Ser1355 carries O-linked (Xyl...) (heparan sulfate) serine glycosylation. Residues 1402-1422 traverse the membrane as a helical segment; that stretch reads GMVVGIVAAAALCILILLYAM. Topologically, residues 1423 to 1477 are cytoplasmic; sequence YKYRNRDEGSYHVDESRNYISNSAQSNGAVVKEKQPSSAKSSNKNKKNKDKEYYV. Residues 1444-1470 are interaction with CASK; sequence NSAQSNGAVVKEKQPSSAKSSNKNKKN. The tract at residues 1444–1477 is disordered; sequence NSAQSNGAVVKEKQPSSAKSSNKNKKNKDKEYYV.

Belongs to the neurexin family. In terms of assembly, interacts (via laminin G-like domain 2 and/or laminin G-like domain 6) with NLGN1 forming a heterotetramer, where one NLGN1 dimer interacts with one NRXN1 dimer. Also interacts (via laminin G-like domain 2 and/or laminin G-like domain 6) with NLGN2, NLGN3 and NLGN4L; interactions with NLGN1, NLGN2, NLGN3 and NLGN4L are calcium-dependent. Interacts (via cytoplasmic C-terminal region) with CASK (via the PDZ, SH3 and guanylate kinase-like domains). Interacts (via cytoplasmic C-terminus) with CASKIN1 and APBA1. Interacts (via laminin G-like domain 2) with NXPH1 and NXPH3. Alpha-type isoforms (neurexin-1-alpha) interact (via laminin G-like domain 2 and/or laminin G-like domain 6) with DAG1 (via alpha-dystroglycan chain). Interacts with LRRTM1, LRRTM2, LRRTM3 and LRRTM4. Interacts with SYT13 and SYTL1. Interacts with CBLN1, CBLN2 and, less avidly, with CBLN4. Interacts with CLSTN3. O-glycosylated; contains heparan sulfate. Heparan sulfate attachment is required for synapse development by mediating interactions with neuroligins and LRRTM2. Brain.

The protein localises to the presynaptic cell membrane. In terms of biological role, cell surface protein involved in cell-cell-interactions, exocytosis of secretory granules and regulation of signal transmission. Function is isoform-specific. Alpha-type isoforms have a long N-terminus with six laminin G-like domains and play an important role in synaptic signal transmission. Alpha-type isoforms play a role in the regulation of calcium channel activity and Ca(2+)-triggered neurotransmitter release at synapses and at neuromuscular junctions. They play an important role in Ca(2+)-triggered exocytosis of secretory granules in pituitary gland. They may affect their functions at synapses and in endocrine cells via their interactions with proteins from the exocytotic machinery. Likewise, alpha-type isoforms play a role in regulating the activity of postsynaptic NMDA receptors, a subtype of glutamate-gated ion channels. Both alpha-type and beta-type isoforms may play a role in the formation or maintenance of synaptic junctions via their interactions (via the extracellular domains) with neuroligin family members, CBLN1 or CBLN2. In vitro, triggers the de novo formation of presynaptic structures. May be involved in specification of excitatory synapses. Alpha-type isoforms were first identified as receptors for alpha-latrotoxin from spider venom. This Homo sapiens (Human) protein is Neurexin-1 (NRXN1).